Reading from the N-terminus, the 672-residue chain is Single-strand DNA endonuclease ASTE1 (672 aa).

The tract at residues 349-398 is interaction with SHLD2; it reads TFLHTQVENMQRPNAHRISQPIRQIIYGLLLNGPSHAEDIAQNTLPSQLL.

Belongs to the asteroid family. In terms of assembly, interacts with SHLD1, SHLD2, SHLD3, RIF1 and MAD2L2/REV7.

Functionally, structure-specific DNA endonuclease that specifically cleaves single-stranded DNA and 3' overhang DNA. Contributes to the control of DNA double-strand break repair choice by antagonizing BRCA1-dependent homologous recombination (HR) and promoting non-homologous end-joining (NHEJ). Recruited to the single-stranded DNA ends by SHLD2 and cleaves the 3' exposed DNA ends, therefore inhibiting DNA end resection (necessary for HR) and promoting DNA end protection (necessary for NHEJ). This is Single-strand DNA endonuclease ASTE1 (Aste1) from Mus musculus (Mouse).